The primary structure comprises 255 residues: Alkaline ceramidase (255 aa).

Residues 1–28 lie on the Lumenal side of the membrane; the sequence is MADGISSFWGPVTSTIECCEMNYAYSSY. The chain crosses the membrane as a helical span at residues 29-49; sequence IAEFYNTISNVPGILLALIGL. Residues 50–60 lie on the Cytoplasmic side of the membrane; sequence VNALRQRFEKR. A helical membrane pass occupies residues 61 to 81; it reads FSILHISNMILAIGSMLYHAT. Histidine 79 is a Zn(2+) binding site. The Lumenal portion of the chain corresponds to 82–91; the sequence is LQHVQQQSDE. The helical transmembrane segment at 92–112 threads the bilayer; sequence TPMVWEILLYMYILYSPDWHY. The Cytoplasmic portion of the chain corresponds to 113 to 118; sequence RSTMPT. The next 2 helical transmembrane spans lie at 119–139 and 140–160; these read FLFL…FGIG and FKVH…KYYI. The Cytoplasmic portion of the chain corresponds to 161–169; it reads HTEDTAAKR. The chain crosses the membrane as a helical span at residues 170–192; the sequence is IAKWYVATILVGSICWFCDRVFC. The Lumenal segment spans residues 193-205; sequence KTISQWPVNPQGH. Positions 205 and 209 each coordinate Zn(2+). The chain crosses the membrane as a helical span at residues 206–226; sequence ALWHVFMSFNSYCANTFLMFC. Residues 227–255 lie on the Cytoplasmic side of the membrane; the sequence is RAQQRGWNPKVKYFLGVLPYVKIEKPKTQ.

The protein belongs to the alkaline ceramidase family. Zn(2+) is required as a cofactor. In terms of tissue distribution, mostly expressed in roots, shoot meristems and pollen, and, to a lower extent, in mature leaves.

The protein localises to the endoplasmic reticulum membrane. The protein resides in the golgi apparatus membrane. In terms of biological role, hydrolyzes only phytoceramide into phytosphingosine and free fatty acid. Does not have reverse activity. Affects plant morphogenesis. Required for the formation of wax layer that ensure cuticle permeability. Implicated in abscisic acid (ABA)-mediated stomatal closure. Involved in both biotic and abiotic stresses. Promotes salt resistance and defenses responses toward pathogenic bacteria (e.g. P.syringae) and against the fungal toxin fumonisin B1 (FB1). The protein is Alkaline ceramidase of Arabidopsis thaliana (Mouse-ear cress).